The sequence spans 123 residues: Small ribosomal subunit protein uS13c (123 aa).

Positions 99 to 123 are disordered; it reads GQRTRSNARTRRGAKKTVAGKKLAK. Residues 100–123 show a composition bias toward basic residues; sequence QRTRSNARTRRGAKKTVAGKKLAK.

This sequence belongs to the universal ribosomal protein uS13 family. In terms of assembly, part of the 30S ribosomal subunit.

Its subcellular location is the plastid. It is found in the chloroplast. Functionally, located at the top of the head of the 30S subunit, it contacts several helices of the 16S rRNA. This chain is Small ribosomal subunit protein uS13c, found in Cyanidioschyzon merolae (strain NIES-3377 / 10D) (Unicellular red alga).